The primary structure comprises 87 residues: Conotoxin Ca6.2 (87 aa).

The first 19 residues, 1-19 (MHTLEMLLLVLLLVPLAPG), serve as a signal peptide directing secretion. A propeptide spanning residues 20–52 (EGDGQAVGGDRNPSEARRAYKRLLQRPARRMDR) is cleaved from the precursor. Cystine bridges form between Cys55/Cys64, Cys58/Cys70, and Cys63/Cys84.

Belongs to the conotoxin Q superfamily. Expressed by the venom duct.

It is found in the secreted. This is Conotoxin Ca6.2 from Conus caracteristicus (Characteristic cone).